An 87-amino-acid polypeptide reads, in one-letter code: Acyl carrier protein 3 (87 aa).

The region spanning 1–79 (MSNPTVLDQI…DLVTYIEAAL (79 aa)) is the Carrier domain. An O-(pantetheine 4'-phosphoryl)serine modification is found at Ser-39.

Belongs to the acyl carrier protein (ACP) family. 4'-phosphopantetheine is transferred from CoA to a specific serine of apo-ACP by AcpS. This modification is essential for activity because fatty acids are bound in thioester linkage to the sulfhydryl of the prosthetic group.

Its subcellular location is the cytoplasm. The protein operates within lipid metabolism; fatty acid biosynthesis. Carrier of the growing fatty acid chain in fatty acid biosynthesis. The polypeptide is Acyl carrier protein 3 (Ralstonia nicotianae (strain ATCC BAA-1114 / GMI1000) (Ralstonia solanacearum)).